Here is a 309-residue protein sequence, read N- to C-terminus: Dehydrogenase/reductase SDR family member 7B (309 aa).

At 1–4 (MDLT) the chain is on the cytoplasmic side. A helical; Signal-anchor for type II membrane protein membrane pass occupies residues 5–25 (TWAIFPLLLGSIGVYSLYKLL). The Lumenal portion of the chain corresponds to 26–272 (QRLRSGAYLQ…AVGERRKELL (247 aa)). Ser-46 and Leu-48 together coordinate NAD(+). Residue Ser-178 participates in substrate binding. NAD(+) contacts are provided by Tyr-191, Lys-195, and Thr-226. Tyr-191 (proton acceptor) is an active-site residue.

This sequence belongs to the short-chain dehydrogenases/reductases (SDR) family.

Its subcellular location is the endoplasmic reticulum membrane. Its function is as follows. Putative oxidoreductase. The sequence is that of Dehydrogenase/reductase SDR family member 7B (dhrs7b) from Xenopus tropicalis (Western clawed frog).